A 1160-amino-acid polypeptide reads, in one-letter code: ATP-dependent RNA helicase dhx8 (1160 aa).

Disordered stretches follow at residues 75 to 140 (TTTT…SIPN) and 153 to 192 (PIDDEKTKEELKRKQQDMDREFEREQREKRDRDREQQNKR). 2 stretches are compositionally biased toward low complexity: residues 76–110 (TTTTNNNNNNNNNNTNTAKTTTTTTTTTTTTNNNN) and 122–132 (NSNSNNQKKNQ). The segment covering 155-192 (DDEKTKEELKRKQQDMDREFEREQREKRDRDREQQNKR) has biased composition (basic and acidic residues). One can recognise an S1 motif domain in the interval 202–274 (YKIYDGKVSS…ASSKISLSMK (73 aa)). The segment covering 294-320 (ISTNSTNNRSNPFKPNNNNNNSSNNNN) has biased composition (low complexity). 2 disordered regions span residues 294-334 (ISTN…KNRK) and 409-438 (KPNGSLQRAASTQTALSKERKEEKNQQRNE). Residues 412 to 424 (GSLQRAASTQTAL) show a composition bias toward polar residues. A compositionally biased stretch (basic and acidic residues) spans 425-438 (SKERKEEKNQQRNE). Positions 518–681 (LQAVSEHQLL…FMNAQLFIIP (164 aa)) constitute a Helicase ATP-binding domain. ATP is bound at residue 531-538 (GETGSGKT). Residues 628 to 631 (DEAH) carry the DEAH box motif. Residues 699–879 (YLDASLITVM…NTVLTMKAMG (181 aa)) form the Helicase C-terminal domain.

The protein belongs to the DEAD box helicase family. DEAH subfamily. DDX8/PRP22 sub-subfamily. Identified in the spliceosome complex.

Its subcellular location is the nucleus. The enzyme catalyses ATP + H2O = ADP + phosphate + H(+). In terms of biological role, facilitates nuclear export of spliced mRNA by releasing the RNA from the spliceosome. The chain is ATP-dependent RNA helicase dhx8 (dhx8) from Dictyostelium discoideum (Social amoeba).